Reading from the N-terminus, the 667-residue chain is Protein MAIN-LIKE 2 (667 aa).

Met-1 is subject to N-acetylmethionine. Positions 492–508 (MRGKERVRRKGMGKRRK) are enriched in basic residues. Disordered regions lie at residues 492 to 523 (MRGKERVRRKGMGKRRKGIDPMEDYGGSEDES) and 594 to 667 (KLQE…TVVA). Residues 512 to 523 (PMEDYGGSEDES) show a composition bias toward acidic residues. Basic and acidic residues-rich tracts occupy residues 608–618 (YDVKKEDKESK) and 656–667 (SLDRRGENTVVA).

As to expression, expressed in root tips, the shoot apical meristem (SAM), leaves, mature flowers and embryos.

It localises to the nucleus. Functionally, maybe required to maintain cell division activity in meristematic cells. This is Protein MAIN-LIKE 2 from Arabidopsis thaliana (Mouse-ear cress).